A 270-amino-acid polypeptide reads, in one-letter code: Putative pyruvate, phosphate dikinase regulatory protein 2 (270 aa).

151–158 provides a ligand contact to ADP; sequence GVSRTSKT.

This sequence belongs to the pyruvate, phosphate/water dikinase regulatory protein family. PDRP subfamily.

It catalyses the reaction N(tele)-phospho-L-histidyl/L-threonyl-[pyruvate, phosphate dikinase] + ADP = N(tele)-phospho-L-histidyl/O-phospho-L-threonyl-[pyruvate, phosphate dikinase] + AMP + H(+). The enzyme catalyses N(tele)-phospho-L-histidyl/O-phospho-L-threonyl-[pyruvate, phosphate dikinase] + phosphate + H(+) = N(tele)-phospho-L-histidyl/L-threonyl-[pyruvate, phosphate dikinase] + diphosphate. Bifunctional serine/threonine kinase and phosphorylase involved in the regulation of the pyruvate, phosphate dikinase (PPDK) by catalyzing its phosphorylation/dephosphorylation. This chain is Putative pyruvate, phosphate dikinase regulatory protein 2, found in Listeria welshimeri serovar 6b (strain ATCC 35897 / DSM 20650 / CCUG 15529 / CIP 8149 / NCTC 11857 / SLCC 5334 / V8).